Consider the following 232-residue polypeptide: 2-C-methyl-D-erythritol 4-phosphate cytidylyltransferase (232 aa).

Belongs to the IspD/TarI cytidylyltransferase family. IspD subfamily.

The catalysed reaction is 2-C-methyl-D-erythritol 4-phosphate + CTP + H(+) = 4-CDP-2-C-methyl-D-erythritol + diphosphate. It participates in isoprenoid biosynthesis; isopentenyl diphosphate biosynthesis via DXP pathway; isopentenyl diphosphate from 1-deoxy-D-xylulose 5-phosphate: step 2/6. Catalyzes the formation of 4-diphosphocytidyl-2-C-methyl-D-erythritol from CTP and 2-C-methyl-D-erythritol 4-phosphate (MEP). This is 2-C-methyl-D-erythritol 4-phosphate cytidylyltransferase from Synechococcus sp. (strain ATCC 27144 / PCC 6301 / SAUG 1402/1) (Anacystis nidulans).